The sequence spans 496 residues: Stomatal closure-related actin-binding protein 1 (496 aa).

Residues Arg126–Met269 are a coiled coil.

This sequence belongs to the SCAB family. Dimer. Dimerization is required for actin-binding activity. Expressed in roots, stems, leaves, flowers, siliques and guard cells.

It is found in the cytoplasm. The protein localises to the cytoskeleton. Its function is as follows. Plant-specific actin binding protein that bundles and stabilizes microfilaments (MFs). Has no nucleation or capping activity. Regulates MF reorganization during stomatal closure. The binding to F-actin is insensitive to Ca(2+) and pH. Binds weakly to inositol phosphates. This chain is Stomatal closure-related actin-binding protein 1, found in Arabidopsis thaliana (Mouse-ear cress).